The sequence spans 65 residues: Metallothionein (65 aa).

The protein belongs to the metallothionein superfamily. Type 4 family.

Functionally, metallothioneins have a high content of cysteine residues that bind various heavy metals. The polypeptide is Metallothionein (Paracentrotus lividus (Common sea urchin)).